The primary structure comprises 185 residues: Large ribosomal subunit protein uL5 (185 aa).

It belongs to the universal ribosomal protein uL5 family. Part of the 50S ribosomal subunit; part of the 5S rRNA/L5/L18/L25 subcomplex. Contacts the 5S rRNA and the P site tRNA. Forms a bridge to the 30S subunit in the 70S ribosome.

In terms of biological role, this is one of the proteins that bind and probably mediate the attachment of the 5S RNA into the large ribosomal subunit, where it forms part of the central protuberance. In the 70S ribosome it contacts protein S13 of the 30S subunit (bridge B1b), connecting the 2 subunits; this bridge is implicated in subunit movement. Contacts the P site tRNA; the 5S rRNA and some of its associated proteins might help stabilize positioning of ribosome-bound tRNAs. This Xanthobacter autotrophicus (strain ATCC BAA-1158 / Py2) protein is Large ribosomal subunit protein uL5.